Consider the following 306-residue polypeptide: Acetyl-coenzyme A carboxylase carboxyl transferase subunit beta (306 aa).

The CoA carboxyltransferase N-terminal domain occupies 27 to 296 (LWHKCPSCEA…PRFVAPVIEP (270 aa)). 4 residues coordinate Zn(2+): C31, C34, C50, and C53. The C4-type zinc-finger motif lies at 31–53 (CPSCEAVLYRPELEKTLDVCPKC).

Belongs to the AccD/PCCB family. Acetyl-CoA carboxylase is a heterohexamer composed of biotin carboxyl carrier protein (AccB), biotin carboxylase (AccC) and two subunits each of ACCase subunit alpha (AccA) and ACCase subunit beta (AccD). The cofactor is Zn(2+).

The protein resides in the cytoplasm. It catalyses the reaction N(6)-carboxybiotinyl-L-lysyl-[protein] + acetyl-CoA = N(6)-biotinyl-L-lysyl-[protein] + malonyl-CoA. The protein operates within lipid metabolism; malonyl-CoA biosynthesis; malonyl-CoA from acetyl-CoA: step 1/1. Component of the acetyl coenzyme A carboxylase (ACC) complex. Biotin carboxylase (BC) catalyzes the carboxylation of biotin on its carrier protein (BCCP) and then the CO(2) group is transferred by the transcarboxylase to acetyl-CoA to form malonyl-CoA. This is Acetyl-coenzyme A carboxylase carboxyl transferase subunit beta from Pseudomonas syringae pv. syringae (strain B728a).